Reading from the N-terminus, the 172-residue chain is ATP-dependent kinase-like protein notR' (172 aa).

It belongs to the YFH7 family.

ATP-dependent kinase-like protein; part of the gene cluster that mediates the biosynthesis of notoamide, a fungal indole alkaloid that belongs to a family of natural products containing a characteristic bicyclo[2.2.2]diazaoctane core. The first step of notoamide biosynthesis involves coupling of L-proline and L-tryptophan by the bimodular NRPS notE', to produce cyclo-L-tryptophan-L-proline called brevianamide F. The reverse prenyltransferase notF' then acts as a deoxybrevianamide E synthase and converts brevianamide F to deoxybrevianamide E via reverse prenylation at C-2 of the indole ring leading to the bicyclo[2.2.2]diazaoctane core. Deoxybrevianamide E is further hydroxylated at C-6 of the indole ring, likely catalyzed by the cytochrome P450 monooxygenase notG', to yield 6-hydroxy-deoxybrevianamide E. 6-hydroxy-deoxybrevianamide E is a specific substrate of the prenyltransferase notC' for normal prenylation at C-7 to produce 6-hydroxy-7-prenyl-deoxybrevianamide, also called notoamide S. As the proposed pivotal branching point in notoamide biosynthesis, notoamide S can be diverted to notoamide E through an oxidative pyran ring closure putatively catalyzed by either notH' cytochrome P450 monooxygenase or the notD' FAD-linked oxidoreductase. This step would be followed by an indole 2,3-epoxidation-initiated pinacol-like rearrangement catalyzed by the notB' FAD-dependent monooxygenase leading to the formation of notoamide C and notoamide D. On the other hand notoamide S is converted to notoamide T by notH' (or notD'), a bifunctional oxidase that also functions as the intramolecular Diels-Alderase responsible for generation of (-)-notoamide T. To generate antipodal (+)-notoaminide T, notH (or notD) in Aspergillus strain MF297-2 is expected to catalyze a Diels-Alder reaction leading to the opposite stereochemistry. The remaining oxidoreductase notD' (or notH') likely catalyzes the oxidative pyran ring formation to yield (-)-stephacidin A. The FAD-dependent monooxygenase notI' is highly similar to notB' and is predicted to catalyze a similar conversion from (-)-stephacidin A to (+)-notoamide B via the 2,3-epoxidation of (-)-stephacidin A followed by a pinacol-type rearrangement. Finally, it remains unclear which enzyme could be responsible for the final hydroxylation steps leading to notoamide A and sclerotiamide. The function of notQ' in the notoamide biosynthesis has not been determined yet. This is ATP-dependent kinase-like protein notR' from Aspergillus versicolor.